The primary structure comprises 221 residues: MQTPSLELKGSSFTLSVLHINQLDLEKVTIELDGKLAIAPQFFLGAPLVVNLSRIKAPDYNLAALKDLLISRQLVIVGITEAIDEIATQAKALGLANIKSGKQSNTQPQLPKTSKIVKQNVRSGQQIYAKNADLVIFGTVGNGAEVIADGSIHIYGNLRGKAMAGASGDKHAIIIARSLEAELVSIAGQYWLAENIQHNSTTKSGCVRLEGESLTIEALPL.

Belongs to the MinC family. In terms of assembly, interacts with MinD and FtsZ.

In terms of biological role, cell division inhibitor that blocks the formation of polar Z ring septums. Rapidly oscillates between the poles of the cell to destabilize FtsZ filaments that have formed before they mature into polar Z rings. Prevents FtsZ polymerization. The sequence is that of Probable septum site-determining protein MinC from Shewanella woodyi (strain ATCC 51908 / MS32).